Reading from the N-terminus, the 292-residue chain is Acetylglutamate kinase (292 aa).

Substrate is bound by residues 64–65 (GG), Arg86, and Asn190.

Belongs to the acetylglutamate kinase family. ArgB subfamily.

The protein localises to the cytoplasm. It catalyses the reaction N-acetyl-L-glutamate + ATP = N-acetyl-L-glutamyl 5-phosphate + ADP. Its pathway is amino-acid biosynthesis; L-arginine biosynthesis; N(2)-acetyl-L-ornithine from L-glutamate: step 2/4. Its function is as follows. Catalyzes the ATP-dependent phosphorylation of N-acetyl-L-glutamate. The polypeptide is Acetylglutamate kinase (Leptospira biflexa serovar Patoc (strain Patoc 1 / Ames)).